Here is a 111-residue protein sequence, read N- to C-terminus: Phosphoribosyl-AMP cyclohydrolase (111 aa).

Residue Asp80 coordinates Mg(2+). Cys81 contributes to the Zn(2+) binding site. Positions 82 and 84 each coordinate Mg(2+). Zn(2+)-binding residues include Cys97 and Cys104.

It belongs to the PRA-CH family. As to quaternary structure, homodimer. Mg(2+) is required as a cofactor. It depends on Zn(2+) as a cofactor.

It is found in the cytoplasm. It catalyses the reaction 1-(5-phospho-beta-D-ribosyl)-5'-AMP + H2O = 1-(5-phospho-beta-D-ribosyl)-5-[(5-phospho-beta-D-ribosylamino)methylideneamino]imidazole-4-carboxamide. The protein operates within amino-acid biosynthesis; L-histidine biosynthesis; L-histidine from 5-phospho-alpha-D-ribose 1-diphosphate: step 3/9. Functionally, catalyzes the hydrolysis of the adenine ring of phosphoribosyl-AMP. The polypeptide is Phosphoribosyl-AMP cyclohydrolase (Mycobacterium ulcerans (strain Agy99)).